Reading from the N-terminus, the 300-residue chain is Free fatty acid receptor 1 (300 aa).

The Extracellular portion of the chain corresponds to 1-8; the sequence is MDLPPQLS. Residues 9-31 form a helical membrane-spanning segment; that stretch reads FALYVSAFALGFPLNLLAIRGAV. Topologically, residues 32–41 are cytoplasmic; it reads SHAKLRLTPS. Residues 42–64 traverse the membrane as a helical segment; it reads LVYTLHLACSDLLLAITLPLKAV. Residues 65 to 79 lie on the Extracellular side of the membrane; the sequence is EALASGVWPLPLPFC. An intrachain disulfide couples cysteine 79 to cysteine 170. A helical membrane pass occupies residues 80–101; sequence PVFALAHFAPLYAGGGFLAALS. The Cytoplasmic segment spans residues 102–121; sequence AGRYLGAAFPFGYQAIRRPC. A helical membrane pass occupies residues 122–142; sequence YSWGVCVAIWALVLCHLGLAL. The Extracellular portion of the chain corresponds to 143-178; that stretch reads GLEAPRGWVDNTTSSLGINIPVNGSPVCLEAWDPDS. A glycan (N-linked (GlcNAc...) asparagine) is linked at asparagine 153. Residues 179–200 traverse the membrane as a helical segment; sequence ARPARLSFSILLFFLPLVITAF. Residues 201 to 223 are Cytoplasmic-facing; it reads CYVGCLRALVHSGLSHKRKLRAA. The chain crosses the membrane as a helical span at residues 224 to 248; that stretch reads WVAGGALLTLLLCLGPYNASNVASF. Over 249–256 the chain is Extracellular; it reads INPDLEGS. A helical transmembrane segment spans residues 257 to 279; sequence WRKLGLITGAWSVVLNPLVTGYL. Topologically, residues 280–300 are cytoplasmic; the sequence is GTGPGQGTICVTRTPRGTIQK.

Belongs to the G-protein coupled receptor 1 family. In terms of tissue distribution, expressed abundantly in pancreatic beta cells.

The protein resides in the cell membrane. Its function is as follows. G-protein coupled receptor for medium and long chain saturated and unsaturated fatty acids that plays an important role in glucose homeostasis. Fatty acid binding increases glucose-stimulated insulin secretion, and may also enhance the secretion of glucagon-like peptide 1 (GLP-1). May also play a role in bone homeostasis; receptor signaling activates pathways that inhibit osteoclast differentiation. Ligand binding leads to a conformation change that triggers signaling via G-proteins that activate phospholipase C, leading to an increase of the intracellular calcium concentration. Seems to act through a G(q) and G(i)-mediated pathway. Mediates the anti-inflammatory effects of omega-3 polyunsaturated fatty acids (PUFAs) via inhibition of NLRP3 inflammasome activation. This is Free fatty acid receptor 1 (Ffar1) from Rattus norvegicus (Rat).